The following is a 542-amino-acid chain: Calcium/calmodulin-dependent protein kinase type II subunit beta (542 aa).

A Protein kinase domain is found at 14-272 (YQLYEDIGKG…AHEALKHPWV (259 aa)). Tyrosine 17 carries the post-translational modification Phosphotyrosine. ATP contacts are provided by residues 20-28 (IGKGAFSVV) and lysine 43. Residue aspartate 136 is the Proton acceptor of the active site. The autoinhibitory domain stretch occupies residues 283 to 292 (HRQETVECLK). Threonine 287 carries the post-translational modification Phosphothreonine; by autocatalysis. A calmodulin-binding region spans residues 291–301 (LKKFNARRKLK). A phosphothreonine; by autocatalysis mark is found at threonine 306 and threonine 307. Residues 349–376 (ADGVKPQTNSTKNSSAITSPKGSLPPAA) are disordered. A compositionally biased stretch (polar residues) spans 354–369 (PQTNSTKNSSAITSPK). Phosphoserine occurs at positions 367, 371, 394, and 397. Residues threonine 400 and threonine 401 each carry the phosphothreonine modification.

The protein belongs to the protein kinase superfamily. CAMK Ser/Thr protein kinase family. CaMK subfamily. As to quaternary structure, CAMK2 is composed of 4 different chains: alpha (CAMK2A), beta (CAMK2B), gamma (CAMK2G), and delta (CAMK2D). The different isoforms assemble into homo- or heteromultimeric holoenzymes composed of 12 subunits with two hexameric rings stacked one on top of the other. Interacts with SYNGAP1, CAMK2N2 and MPDZ. Interacts with FOXO3. Interacts (when in a kinase inactive state not associated with calmodulin) with ARC; leading to target ARC to inactive synapses. Interacts with CAMK2N1; this interaction requires CAMK2B activation by Ca(2+). Post-translationally, autophosphorylation of Thr-287 following activation by Ca(2+)/calmodulin. Phosphorylation of Thr-287 locks the kinase into an activated state.

The protein localises to the cytoplasm. Its subcellular location is the cytoskeleton. It is found in the microtubule organizing center. The protein resides in the centrosome. It localises to the sarcoplasmic reticulum membrane. The protein localises to the synapse. It catalyses the reaction L-seryl-[protein] + ATP = O-phospho-L-seryl-[protein] + ADP + H(+). It carries out the reaction L-threonyl-[protein] + ATP = O-phospho-L-threonyl-[protein] + ADP + H(+). Activated by Ca(2+)/calmodulin. Binding of calmodulin results in conformational change that relieves intrasteric autoinhibition and allows autophosphorylation of Thr-287 which turns the kinase in a constitutively active form and confers to the kinase a Ca(2+)-independent activity. Functionally, calcium/calmodulin-dependent protein kinase that functions autonomously after Ca(2+)/calmodulin-binding and autophosphorylation, and is involved in dendritic spine and synapse formation, neuronal plasticity and regulation of sarcoplasmic reticulum Ca(2+) transport in skeletal muscle. In neurons, plays an essential structural role in the reorganization of the actin cytoskeleton during plasticity by binding and bundling actin filaments in a kinase-independent manner. This structural function is required for correct targeting of CaMK2A, which acts downstream of NMDAR to promote dendritic spine and synapse formation and maintain synaptic plasticity which enables long-term potentiation (LTP) and hippocampus-dependent learning. In developing hippocampal neurons, promotes arborization of the dendritic tree and in mature neurons, promotes dendritic remodeling. Also regulates the migration of developing neurons. Participates in the modulation of skeletal muscle function in response to exercise. In slow-twitch muscles, is involved in regulation of sarcoplasmic reticulum (SR) Ca(2+) transport and in fast-twitch muscle participates in the control of Ca(2+) release from the SR through phosphorylation of triadin, a ryanodine receptor-coupling factor, and phospholamban (PLN/PLB), an endogenous inhibitor of SERCA2A/ATP2A2. In response to interferon-gamma (IFN-gamma) stimulation, catalyzes phosphorylation of STAT1, stimulating the JAK-STAT signaling pathway. Phosphorylates reticulophagy regulator RETREG1 at 'Thr-134' under endoplasmic reticulum stress conditions which enhances RETREG1 oligomerization and its membrane scission and reticulophagy activity. In Mus musculus (Mouse), this protein is Calcium/calmodulin-dependent protein kinase type II subunit beta (Camk2b).